The chain runs to 713 residues: Glutamine-dependent NAD(+) synthetase (713 aa).

One can recognise a CN hydrolase domain in the interval 4–275 (VTLATCNLNQ…IEVITATVDL (272 aa)). The active-site Proton acceptor; for glutaminase activity is Glu-44. The active-site For glutaminase activity is Lys-114. The active-site Nucleophile; for glutaminase activity is the Cys-175. A ligase region spans residues 324 to 703 (YNTPAEEIGF…QRPQLKNTVN (380 aa)). Residue 354–361 (PLSGGADS) coordinates ATP. The active site involves Ser-356.

It in the C-terminal section; belongs to the NAD synthetase family.

The enzyme catalyses deamido-NAD(+) + L-glutamine + ATP + H2O = L-glutamate + AMP + diphosphate + NAD(+) + H(+). Its pathway is cofactor biosynthesis; NAD(+) biosynthesis; NAD(+) from deamido-NAD(+) (L-Gln route): step 1/1. The polypeptide is Glutamine-dependent NAD(+) synthetase (nadsyn1) (Dictyostelium discoideum (Social amoeba)).